The following is a 497-amino-acid chain: Arginine/ornithine antiporter ArcD2 (497 aa).

13 helical membrane-spanning segments follow: residues 8–28 (GISLFALLAIIISGAIGGGVF), 41–61 (GGVVISWLFIGFGILMLVLSF), 88–108 (FLSGWGYWISAWTGTIGFAVL), 127–147 (SLTILSVIIVSIISWILMLLV), 160–180 (IVMIAKLIPLVVFSITGIILF), 220–240 (IKGSLMVMVWVFVGIEGATMM), 255–275 (VIGLAVLLVIYVLLSLLPYGY), 297–317 (VGGWGGSLMAVGLMISLLGAW), 354–374 (LLITQLMIQIFIIITYFVANA), 378–398 (FIYMATAVIMICYALVGAYLF), 406–426 (SVKNILIGFFTFAFQALALYL), 429–449 (WQYVWLAMILYTIGFLLFIGA), and 462–482 (WLGMLVVTVLGVLAIVVLICG).

This sequence belongs to the amino acid-polyamine-organocation (APC) superfamily. Basic amino acid/polyamine antiporter (APA) (TC 2.A.3.2) family.

The protein resides in the cell membrane. The catalysed reaction is L-ornithine(in) + L-arginine(out) = L-ornithine(out) + L-arginine(in). Catalyzes electroneutral exchange between L-arginine and L-ornithine. Can also efficiently translocate L-alanine. May function in vivo as a L-arginine/L-alanine exchanger in a pathway together with the arcT gene, which is found adjacent to the arcD2 gene in the ADI gene cluster. This chain is Arginine/ornithine antiporter ArcD2, found in Lactococcus lactis subsp. cremoris (strain MG1363).